The following is a 63-amino-acid chain: Small ribosomal subunit protein eS30 (63 aa).

The tract at residues M1–R33 is disordered.

It belongs to the eukaryotic ribosomal protein eS30 family. In terms of assembly, component of the small ribosomal subunit. Mature ribosomes consist of a small (40S) and a large (60S) subunit. The 40S subunit contains about 32 different proteins and 1 molecule of RNA (18S). The 60S subunit contains 45 different proteins and 3 molecules of RNA (25S, 5.8S and 5S).

It localises to the cytoplasm. Component of the ribosome, a large ribonucleoprotein complex responsible for the synthesis of proteins in the cell. The small ribosomal subunit (SSU) binds messenger RNAs (mRNAs) and translates the encoded message by selecting cognate aminoacyl-transfer RNA (tRNA) molecules. The large subunit (LSU) contains the ribosomal catalytic site termed the peptidyl transferase center (PTC), which catalyzes the formation of peptide bonds, thereby polymerizing the amino acids delivered by tRNAs into a polypeptide chain. The nascent polypeptides leave the ribosome through a tunnel in the LSU and interact with protein factors that function in enzymatic processing, targeting, and the membrane insertion of nascent chains at the exit of the ribosomal tunnel. In Candida albicans (strain SC5314 / ATCC MYA-2876) (Yeast), this protein is Small ribosomal subunit protein eS30 (RPS30).